The chain runs to 320 residues: L-lactate dehydrogenase (320 aa).

Residues Val-18, Asp-39, Arg-44, Tyr-69, and 83 to 84 each bind NAD(+); that span reads GA. The substrate site is built by Gln-86 and Arg-92. Residues Thr-105, 122–124, and Ser-147 contribute to the NAD(+) site; that span reads AAN. 124-127 contributes to the substrate binding site; sequence NPVD. A substrate-binding site is contributed by 152–155; that stretch reads DSAR. The active-site Proton acceptor is the His-179. Residue Tyr-223 is modified to Phosphotyrosine. Residue Thr-232 participates in substrate binding.

The protein belongs to the LDH/MDH superfamily. LDH family. In terms of assembly, homotetramer.

The protein resides in the cytoplasm. The catalysed reaction is (S)-lactate + NAD(+) = pyruvate + NADH + H(+). It participates in fermentation; pyruvate fermentation to lactate; (S)-lactate from pyruvate: step 1/1. Functionally, catalyzes the conversion of lactate to pyruvate. The chain is L-lactate dehydrogenase from Pediococcus pentosaceus (strain ATCC 25745 / CCUG 21536 / LMG 10740 / 183-1w).